The sequence spans 418 residues: Cyclin-A1 (418 aa).

The protein belongs to the cyclin family. Cyclin AB subfamily. In terms of assembly, interacts with the CDK1 and the CDK2 protein kinases to form a serine/threonine kinase holoenzyme complex. The cyclin subunit imparts substrate specificity to the complex.

The protein localises to the nucleus. In terms of biological role, may be involved in the control of the cell cycle at the G1/S (start) and G2/M (mitosis) transitions. The chain is Cyclin-A1 (ccna1) from Xenopus laevis (African clawed frog).